The primary structure comprises 246 residues: Pyridoxine 5'-phosphate synthase (246 aa).

3-amino-2-oxopropyl phosphate is bound at residue Asn-12. Residue 14–15 coordinates 1-deoxy-D-xylulose 5-phosphate; that stretch reads DH. Position 23 (Arg-23) interacts with 3-amino-2-oxopropyl phosphate. His-48 functions as the Proton acceptor in the catalytic mechanism. Arg-50 and His-55 together coordinate 1-deoxy-D-xylulose 5-phosphate. Glu-75 functions as the Proton acceptor in the catalytic mechanism. Thr-105 contacts 1-deoxy-D-xylulose 5-phosphate. The active-site Proton donor is the His-196. 3-amino-2-oxopropyl phosphate-binding positions include Gly-197 and 218–219; that span reads GH.

It belongs to the PNP synthase family. Homooctamer; tetramer of dimers.

Its subcellular location is the cytoplasm. It carries out the reaction 3-amino-2-oxopropyl phosphate + 1-deoxy-D-xylulose 5-phosphate = pyridoxine 5'-phosphate + phosphate + 2 H2O + H(+). The protein operates within cofactor biosynthesis; pyridoxine 5'-phosphate biosynthesis; pyridoxine 5'-phosphate from D-erythrose 4-phosphate: step 5/5. In terms of biological role, catalyzes the complicated ring closure reaction between the two acyclic compounds 1-deoxy-D-xylulose-5-phosphate (DXP) and 3-amino-2-oxopropyl phosphate (1-amino-acetone-3-phosphate or AAP) to form pyridoxine 5'-phosphate (PNP) and inorganic phosphate. This Pseudomonas savastanoi pv. phaseolicola (strain 1448A / Race 6) (Pseudomonas syringae pv. phaseolicola (strain 1448A / Race 6)) protein is Pyridoxine 5'-phosphate synthase.